The following is a 237-amino-acid chain: Sugar fermentation stimulation protein homolog (237 aa).

Belongs to the SfsA family.

The polypeptide is Sugar fermentation stimulation protein homolog (Thioalkalivibrio sulfidiphilus (strain HL-EbGR7)).